The sequence spans 609 residues: tRNA uridine 5-carboxymethylaminomethyl modification enzyme MnmG (609 aa).

Residues 11–16 (GAGHAG), Val123, and Thr178 contribute to the FAD site. Residue 270 to 284 (GPRYCPSIEDKVVRF) coordinates NAD(+). Gln367 contacts FAD.

The protein belongs to the MnmG family. As to quaternary structure, homodimer. Heterotetramer of two MnmE and two MnmG subunits. FAD serves as cofactor.

It is found in the cytoplasm. NAD-binding protein involved in the addition of a carboxymethylaminomethyl (cmnm) group at the wobble position (U34) of certain tRNAs, forming tRNA-cmnm(5)s(2)U34. The sequence is that of tRNA uridine 5-carboxymethylaminomethyl modification enzyme MnmG from Mycoplasmopsis synoviae (strain 53) (Mycoplasma synoviae).